A 423-amino-acid polypeptide reads, in one-letter code: Adenylosuccinate synthetase (423 aa).

Residues 12 to 18 and 40 to 42 each bind GTP; these read GDEGKGK and GHT. The Proton acceptor role is filled by aspartate 13. Mg(2+) is bound by residues aspartate 13 and glycine 40. IMP contacts are provided by residues 13-16, 38-41, threonine 128, arginine 142, glutamine 223, threonine 238, and arginine 302; these read DEGK and NAGH. Residue histidine 41 is the Proton donor of the active site. Substrate is bound at residue 298-304; that stretch reads TTTGRPR. GTP is bound by residues arginine 304, 330–332, and 412–414; these read RLD and CIG.

This sequence belongs to the adenylosuccinate synthetase family. As to quaternary structure, homodimer. Mg(2+) is required as a cofactor.

Its subcellular location is the cytoplasm. The catalysed reaction is IMP + L-aspartate + GTP = N(6)-(1,2-dicarboxyethyl)-AMP + GDP + phosphate + 2 H(+). The protein operates within purine metabolism; AMP biosynthesis via de novo pathway; AMP from IMP: step 1/2. Functionally, plays an important role in the de novo pathway of purine nucleotide biosynthesis. Catalyzes the first committed step in the biosynthesis of AMP from IMP. This chain is Adenylosuccinate synthetase, found in Dehalococcoides mccartyi (strain ATCC BAA-2266 / KCTC 15142 / 195) (Dehalococcoides ethenogenes (strain 195)).